The primary structure comprises 274 residues: Elongation factor Ts (274 aa).

An involved in Mg(2+) ion dislocation from EF-Tu region spans residues 79–82 (TDFV).

The protein belongs to the EF-Ts family.

The protein localises to the cytoplasm. Functionally, associates with the EF-Tu.GDP complex and induces the exchange of GDP to GTP. It remains bound to the aminoacyl-tRNA.EF-Tu.GTP complex up to the GTP hydrolysis stage on the ribosome. This is Elongation factor Ts from Aster yellows witches'-broom phytoplasma (strain AYWB).